We begin with the raw amino-acid sequence, 376 residues long: 5-amino-6-(D-ribitylamino)uracil--L-tyrosine 4-hydroxyphenyl transferase 1 (376 aa).

Residues 50–284 (VTYVVNRNIN…AISRILLHGH (235 aa)) enclose the Radical SAM core domain. [4Fe-4S] cluster-binding residues include cysteine 64, cysteine 68, and cysteine 71.

The protein belongs to the radical SAM superfamily. CofH family. Consists of two subunits, CofG and CofH. [4Fe-4S] cluster is required as a cofactor.

It catalyses the reaction 5-amino-6-(D-ribitylamino)uracil + L-tyrosine + S-adenosyl-L-methionine = 5-amino-5-(4-hydroxybenzyl)-6-(D-ribitylimino)-5,6-dihydrouracil + 2-iminoacetate + 5'-deoxyadenosine + L-methionine + H(+). The protein operates within cofactor biosynthesis; coenzyme F0 biosynthesis. Catalyzes the radical-mediated synthesis of 5-amino-5-(4-hydroxybenzyl)-6-(D-ribitylimino)-5,6-dihydrouracil from 5-amino-6-(D-ribitylamino)uracil and L-tyrosine. The polypeptide is 5-amino-6-(D-ribitylamino)uracil--L-tyrosine 4-hydroxyphenyl transferase 1 (Methanosarcina barkeri (strain Fusaro / DSM 804)).